Consider the following 151-residue polypeptide: Deoxyuridine 5'-triphosphate nucleotidohydrolase (151 aa).

Substrate contacts are provided by residues Arg70–Gly72, Asn83, Leu87–Asp89, and Met97.

It belongs to the dUTPase family. Requires Mg(2+) as cofactor.

It catalyses the reaction dUTP + H2O = dUMP + diphosphate + H(+). It functions in the pathway pyrimidine metabolism; dUMP biosynthesis; dUMP from dCTP (dUTP route): step 2/2. Functionally, this enzyme is involved in nucleotide metabolism: it produces dUMP, the immediate precursor of thymidine nucleotides and it decreases the intracellular concentration of dUTP so that uracil cannot be incorporated into DNA. In Haemophilus influenzae (strain 86-028NP), this protein is Deoxyuridine 5'-triphosphate nucleotidohydrolase.